Reading from the N-terminus, the 289-residue chain is Eukaryotic translation initiation factor 3 subunit G (289 aa).

Disordered stretches follow at residues 1-31 (MSRL…VISN) and 151-199 (DTMA…GEKM). In terms of domain architecture, RRM spans 209–287 (ATLRVTNVSE…LILRVEFAKK (79 aa)).

It belongs to the eIF-3 subunit G family. As to quaternary structure, component of the eukaryotic translation initiation factor 3 (eIF-3) complex.

The protein resides in the cytoplasm. RNA-binding component of the eukaryotic translation initiation factor 3 (eIF-3) complex, which is involved in protein synthesis of a specialized repertoire of mRNAs and, together with other initiation factors, stimulates binding of mRNA and methionyl-tRNAi to the 40S ribosome. The eIF-3 complex specifically targets and initiates translation of a subset of mRNAs involved in cell proliferation. This subunit can bind 18S rRNA. The chain is Eukaryotic translation initiation factor 3 subunit G from Coccidioides immitis (strain RS) (Valley fever fungus).